Reading from the N-terminus, the 244-residue chain is Small ribosomal subunit protein uS2 (244 aa).

This sequence belongs to the universal ribosomal protein uS2 family.

The protein is Small ribosomal subunit protein uS2 of Psychromonas ingrahamii (strain DSM 17664 / CCUG 51855 / 37).